Reading from the N-terminus, the 1040-residue chain is Multidrug resistance protein MdtB (1040 aa).

12 helical membrane-spanning segments follow: residues 16–36, 342–362, 369–389, 396–416, 440–460, 472–492, 537–557, 869–889, 890–910, 911–931, 968–988, and 998–1018; these read FIMR…AGII, DTQF…YVFL, IIPA…MVFL, LTLM…IVVI, IGFT…PLLF, FAVT…TLTP, WATL…WIVI, LIVA…ESFI, HPVT…LALM, LSGS…IGIV, ILMT…STGV, and IGMV…TPVI.

Belongs to the resistance-nodulation-cell division (RND) (TC 2.A.6) family. MdtB subfamily. As to quaternary structure, part of a tripartite efflux system composed of MdtA, MdtB and MdtC. MdtB forms a heteromultimer with MdtC.

The protein resides in the cell inner membrane. The chain is Multidrug resistance protein MdtB from Enterobacter sp. (strain 638).